Reading from the N-terminus, the 415-residue chain is Serine/threonine transporter SstT (415 aa).

A run of 8 helical transmembrane segments spans residues 23-43, 47-67, 85-105, 144-164, 181-201, 220-240, 303-323, and 333-353; these read ILVG…AAIA, LGTL…LMLV, ILWL…LFSF, ALLK…GFAL, AVTF…FGLV, LMVL…LIVF, GAAI…GIAV, and VVAS…LLLI.

Belongs to the dicarboxylate/amino acid:cation symporter (DAACS) (TC 2.A.23) family.

The protein localises to the cell inner membrane. It carries out the reaction L-serine(in) + Na(+)(in) = L-serine(out) + Na(+)(out). It catalyses the reaction L-threonine(in) + Na(+)(in) = L-threonine(out) + Na(+)(out). Its function is as follows. Involved in the import of serine and threonine into the cell, with the concomitant import of sodium (symport system). This chain is Serine/threonine transporter SstT, found in Cronobacter sakazakii (strain ATCC BAA-894) (Enterobacter sakazakii).